A 910-amino-acid chain; its full sequence is Staphylococcal nuclease domain-containing protein 1 (910 aa).

At A2 the chain carries N-acetylalanine. 3 TNase-like domains span residues 18-166 (TVQR…MWSE), 193-328 (KPVN…IWRD), and 341-496 (KQFV…LHSK). T103 is subject to Phosphothreonine. K193 carries the post-translational modification N6-acetyllysine. Phosphothreonine is present on residues T235 and T240. 2 consecutive short sequence motifs (nuclear localization signal) follow at residues 321–325 (RRLRI) and 388–392 (KKLRP). S426 is modified (phosphoserine). A Glycyl lysine isopeptide (Lys-Gly) (interchain with G-Cter in SUMO2) cross-link involves residue K513. The region spanning 525-660 (GRSEAVVEYV…KQRKEKVWAH (136 aa)) is the TNase-like 4 domain. N6-acetyllysine is present on K641. The residue at position 645 (S645) is a Phosphoserine. One can recognise a Tudor domain in the interval 729-787 (APRRGEFCIAKFVDGEWYRARVEKVESPAKVHVFYIDYGNREILPSTRLGTLPPAFSTR). The residue at position 779 (T779) is a Phosphothreonine. Phosphoserine occurs at positions 785 and 909.

As to quaternary structure, forms a ternary complex with STAT6 and POLR2A. Associates with the RNA-induced silencing complex (RISC). Interacts with the RISC components AGO2, FMR1 and TNRC6A. Interacts with GTF2E1 and GTF2E2. Interacts with PIM1. Interacts with STAT5. Interacts with SYT11 (via C2 2 domain); the interaction with SYT11 is direct. Post-translationally, phosphorylated by PIM1 in vitro.

It localises to the cytoplasm. Its subcellular location is the nucleus. The protein localises to the melanosome. The catalysed reaction is Endonucleolytic cleavage to nucleoside 3'-phosphates and 3'-phosphooligonucleotide end-products.. In terms of biological role, endonuclease that mediates miRNA decay of both protein-free and AGO2-loaded miRNAs. As part of its function in miRNA decay, regulates mRNAs involved in G1-to-S phase transition. Functions as a bridging factor between STAT6 and the basal transcription factor. Plays a role in PIM1 regulation of MYB activity. Functions as a transcriptional coactivator for STAT5. This is Staphylococcal nuclease domain-containing protein 1 (Snd1) from Mus musculus (Mouse).